The sequence spans 659 residues: Homeobox protein slou (659 aa).

The span at 1–21 (MVMLQSPAQKASDSASAQNTA) shows a compositional bias: polar residues. 6 disordered regions span residues 1 to 63 (MVML…PAAK), 94 to 152 (MSSE…SFSS), 198 to 298 (AQQH…AAPS), 316 to 349 (TQAS…PSGR), 376 to 440 (QIAA…DRDA), and 455 to 548 (PNKF…PRRA). 3 stretches are compositionally biased toward low complexity: residues 27–51 (SPNS…SVVS), 95–108 (SSES…LSPL), and 120–135 (HNNN…NSNT). Residues 136–152 (RRSQSPPASVGSVSFSS) show a composition bias toward polar residues. The span at 201–232 (HMHHHQHQHHQHPAHPHSHQHPHPHPHPHPHP) shows a compositional bias: basic residues. Repeat copies occupy residues 221 to 222 (HP), 223 to 224 (HP), 225 to 226 (HP), 227 to 228 (HP), 229 to 230 (HP), 231 to 232 (HP), and 233 to 234 (HP). The interval 221–234 (HPHPHPHPHPHPHP) is 7 X 2 AA tandem repeats of H-P. Composition is skewed to pro residues over residues 250–263 (PPSP…PPTS) and 275–286 (PIAPPQNPPHSS). 2 stretches are compositionally biased toward low complexity: residues 287-298 (QPPQQQQVAAPS) and 316-347 (TQAS…GSPS). Positions 388–401 (SEELNVDGNDEDSN) are enriched in acidic residues. Positions 417 to 435 (RSVNSSAAANPSSASTSAS) are enriched in low complexity. Acidic residues-rich tracts occupy residues 478 to 492 (RDEE…DQSE) and 500 to 519 (NDMD…DPSS). Gly residues predominate over residues 528 to 543 (SRNGDGKSGGGGGGGS). Positions 545-604 (PRRARTAFTYEQLVSLENKFKTTRYLSVCERLNLALSLSLTETQVKIWFQNRRTKWKKQN) form a DNA-binding region, homeobox.

This sequence belongs to the NK-1 homeobox family. In terms of tissue distribution, mesodermal precursor cells of distinct muscles during embryogenesis, a subset of neuronal cells of the CNS and their precursors and also in cells of a small region of the midgut.

Its subcellular location is the nucleus. Functionally, may play a role in specifying the identity of particular somatic muscles and neurons of the CNS. The protein is Homeobox protein slou (slou) of Drosophila melanogaster (Fruit fly).